We begin with the raw amino-acid sequence, 1408 residues long: ABC multidrug transporter MDR1 (1408 aa).

Low complexity predominate over residues 1–13; sequence MSASPSPIGAAAG. Residues 1–103 are disordered; that stretch reads MSASPSPIGA…SISSAVPKSH (103 aa). Residues 17-38 are compositionally biased toward basic and acidic residues; sequence LQARRDEEVVDSEKDALAHDSH. 2 helical membrane-spanning segments follow: residues 147-167 and 223-243; these read FAAP…IAAG and LYLM…MFIW. In terms of domain architecture, ABC transmembrane type-1 1 spans 157-464; sequence VFGLLLAIAA…LAPELAAVTK (308 aa). Asn-244 carries N-linked (GlcNAc...) asparagine glycosylation. The next 4 membrane-spanning stretches (helical) occupy residues 296–316, 321–341, 408–428, and 436–456; these read KVAL…LAFV, LAGA…IMMT, IMFF…GILV, and GIVI…AMLA. Positions 499-744 constitute an ABC transporter 1 domain; that stretch reads ISFENVRFHY…ENGPYAQLVN (246 aa). Residue 534–541 coordinates ATP; that stretch reads GASGSGKS. 2 helical membrane-spanning segments follow: residues 838–858 and 882–902; these read IFAF…AILF and LWYF…SAGF. An ABC transmembrane type-1 2 domain is found at 838–1125; sequence IFAFIAAICA…VFTFVPDASK (288 aa). N-linked (GlcNAc...) asparagine glycosylation occurs at Asn-934. The next 4 helical transmembrane spans lie at 952 to 972, 973 to 993, 1072 to 1092, and 1099 to 1119; these read GLFG…IGGC, IIGL…IPIL, GLTF…IIDG, and FYTV…VFTF. N-linked (GlcNAc...) asparagine glycosylation is found at Asn-1127 and Asn-1182. In terms of domain architecture, ABC transporter 2 spans 1162–1402; sequence VRIEGVHFRY…KGGYYDLVQM (241 aa). Residue 1197–1204 coordinates ATP; sequence GPSGCGKS. Residue Asn-1404 is glycosylated (N-linked (GlcNAc...) asparagine).

The protein belongs to the ABC transporter superfamily. ABCB family. Multidrug resistance exporter (TC 3.A.1.201) subfamily.

Its subcellular location is the cell membrane. The catalysed reaction is itraconazole(in) + ATP + H2O = itraconazole(out) + ADP + phosphate + H(+). It catalyses the reaction voriconazole(in) + ATP + H2O = voriconazole(out) + ADP + phosphate + H(+). The enzyme catalyses fluconazole(in) + ATP + H2O = fluconazole(out) + ADP + phosphate + H(+). In terms of biological role, pleiotropic ABC efflux transporter that confers resistance to structurally and functionally unrelated compounds including azoles such as fluconazole (FLC), itraconazole (ITC), posaconazole (POS), nocodazole and voriconazole (VRC). This chain is ABC multidrug transporter MDR1, found in Cryptococcus deuterogattii (strain R265) (Cryptococcus gattii VGII (strain R265)).